A 970-amino-acid chain; its full sequence is m7GpppN-mRNA hydrolase (970 aa).

The Nudix hydrolase domain maps to 101–228; that stretch reads KSIPVRGAAI…IKYYLINSMM (128 aa). Ser-116 bears the Phosphoserine mark. Positions 134-155 match the Nudix box motif; that stretch reads GKISKDENDIDCCIREVKEEIG. The Mn(2+) site is built by Glu-149 and Glu-153. The segment covering 302 to 314 has biased composition (basic and acidic residues); that stretch reads QHLKEQSGEHNQQ. 4 disordered regions span residues 302–341, 417–465, 501–520, and 528–692; these read QHLK…ANNK, AVSQ…PKLK, SSQK…NDSV, and YEDF…LSST. Residues 315–334 are compositionally biased toward low complexity; sequence KDQQSSFSSQQQPSIFPSLS. Ser-439 carries the post-translational modification Phosphoserine. Residues 528–539 are compositionally biased toward acidic residues; the sequence is YEDFESSSDEEV. Over residues 560–576 the composition is skewed to basic and acidic residues; it reads SEKDSRRSQKEKPRNDA. The span at 577-590 shows a compositional bias: polar residues; the sequence is SKTNLNASAESNSV. Over residues 596-608 the composition is skewed to low complexity; sequence KSSPSTQSKQNSS. Over residues 625–637 the composition is skewed to acidic residues; it reads DAYEVFESSSDEE. Thr-677 carries the phosphothreonine modification. Residues 677 to 691 are compositionally biased toward polar residues; that stretch reads TESNKSINETVGLSS. 6 positions are modified to phosphoserine: Ser-679, Ser-682, Ser-751, Ser-771, Ser-773, and Ser-778. The tract at residues 831-867 is disordered; that stretch reads LKKNDSTGYPRTEGGPSSEMSTSMKRNDATNNQELDK. Residues 848–863 are compositionally biased toward polar residues; sequence SEMSTSMKRNDATNNQ.

Belongs to the Nudix hydrolase family. DCP2 subfamily. As to quaternary structure, component of the decapping complex composed of DCP1 and DCP2. Interacts with mRNA, LSM2, LSM4 and LSM8. Interacts with EDC3. Mn(2+) serves as cofactor.

It is found in the cytoplasm. Its subcellular location is the P-body. It carries out the reaction a 5'-end (N(7)-methyl 5'-triphosphoguanosine)-ribonucleoside in mRNA + H2O = N(7)-methyl-GDP + a 5'-end phospho-ribonucleoside in mRNA + 2 H(+). Its function is as follows. Catalytic component of the decapping complex necessary for the degradation of mRNAs, both in normal mRNA turnover and in nonsense-mediated mRNA decay. Removes the 7-methyl guanine cap structure from mRNA molecules, yielding a 5'-phosphorylated mRNA fragment and 7m-GDP. Decapping is the major pathway of mRNA degradation in yeast and occurs through deadenylation, decapping and subsequent 5' to 3' exonucleolytic decay of the transcript body. Blocks autophagy in nutrient-rich conditions by repressing the expression of ATG-related genes through degradation of their transcripts. The protein is m7GpppN-mRNA hydrolase of Saccharomyces cerevisiae (strain ATCC 204508 / S288c) (Baker's yeast).